We begin with the raw amino-acid sequence, 655 residues long: D-xylonate dehydratase YagF (655 aa).

It belongs to the IlvD/Edd family.

The enzyme catalyses D-xylonate = 2-dehydro-3-deoxy-D-arabinonate + H2O. Functionally, catalyzes the dehydration of D-xylonic acid to form 2-dehydro-3-deoxy-D-pentonate. The chain is D-xylonate dehydratase YagF (yagF) from Escherichia coli (strain K12).